Consider the following 338-residue polypeptide: MDDRMVDQSQHEDESSFELSLRPHFLKQYIGQASIKSNLEVFIKAAKLREEPLDHVLLFGPPGLGKTTLSNIIANEMNVNIRTVTGPAIERPGDLAAILSGLQPGDVLFIDEIHRLSSVVEEVLYPAMEDFYLDIVIGKGEEARSIRIDLPPFTLVGATTRAGSLTGPLRDRFGVHLRLEYYKESELKDIIIRTAEVLNTEIDEESAVELAKRSRGTPRIANRLLKRVRDFQQVNEDDMIYIETTKRALQLLQVDDYGLDYIDHKMMSCIINQYNGGPVGLDTIAVSIGEERITIEDVYEPFLIQKGFLERTPRGRKATPLAYEHFEAKNGKRDNFEY.

The interval 1–182 (MDDRMVDQSQ…FGVHLRLEYY (182 aa)) is large ATPase domain (RuvB-L). ATP contacts are provided by residues L21, R22, G63, K66, T67, T68, 129 to 131 (EDF), R172, Y182, and R219. T67 lines the Mg(2+) pocket. Residues 183 to 253 (KESELKDIII…TTKRALQLLQ (71 aa)) are small ATPAse domain (RuvB-S). A head domain (RuvB-H) region spans residues 256–338 (DYGLDYIDHK…KNGKRDNFEY (83 aa)). 3 residues coordinate DNA: R292, R311, and R316.

The protein belongs to the RuvB family. In terms of assembly, homohexamer. Forms an RuvA(8)-RuvB(12)-Holliday junction (HJ) complex. HJ DNA is sandwiched between 2 RuvA tetramers; dsDNA enters through RuvA and exits via RuvB. An RuvB hexamer assembles on each DNA strand where it exits the tetramer. Each RuvB hexamer is contacted by two RuvA subunits (via domain III) on 2 adjacent RuvB subunits; this complex drives branch migration. In the full resolvosome a probable DNA-RuvA(4)-RuvB(12)-RuvC(2) complex forms which resolves the HJ.

It localises to the cytoplasm. It carries out the reaction ATP + H2O = ADP + phosphate + H(+). In terms of biological role, the RuvA-RuvB-RuvC complex processes Holliday junction (HJ) DNA during genetic recombination and DNA repair, while the RuvA-RuvB complex plays an important role in the rescue of blocked DNA replication forks via replication fork reversal (RFR). RuvA specifically binds to HJ cruciform DNA, conferring on it an open structure. The RuvB hexamer acts as an ATP-dependent pump, pulling dsDNA into and through the RuvAB complex. RuvB forms 2 homohexamers on either side of HJ DNA bound by 1 or 2 RuvA tetramers; 4 subunits per hexamer contact DNA at a time. Coordinated motions by a converter formed by DNA-disengaged RuvB subunits stimulates ATP hydrolysis and nucleotide exchange. Immobilization of the converter enables RuvB to convert the ATP-contained energy into a lever motion, pulling 2 nucleotides of DNA out of the RuvA tetramer per ATP hydrolyzed, thus driving DNA branch migration. The RuvB motors rotate together with the DNA substrate, which together with the progressing nucleotide cycle form the mechanistic basis for DNA recombination by continuous HJ branch migration. Branch migration allows RuvC to scan DNA until it finds its consensus sequence, where it cleaves and resolves cruciform DNA. The sequence is that of Holliday junction branch migration complex subunit RuvB from Staphylococcus carnosus (strain TM300).